A 494-amino-acid polypeptide reads, in one-letter code: Sphingosine-1-phosphate transporter MFSD2B (494 aa).

Positions 1-12 are enriched in pro residues; that stretch reads MSVPHGPTPAPV. Residues 1 to 26 are disordered; it reads MSVPHGPTPAPVAEPHTQEPGSDKRD. 10 helical membrane passes run 103–123, 140–160, 179–199, 223–243, 277–297, 310–330, 339–359, 360–380, 402–422, and 449–469; these read LMPW…FLWF, CLFQ…TMIL, MAGT…AHGS, IAAA…CLGV, VVSF…LVLF, NLVL…EWVL, AFGI…PSAP, VAYV…LLPW, TIFY…ALGI, and VLIG…LLVG. The segment at 473–494 is disordered; it reads KMPRQDTSSQLSLRRRTSYSLA. The span at 485–494 shows a compositional bias: basic residues; it reads LRRRTSYSLA.

This sequence belongs to the major facilitator superfamily. As to expression, widely expressed with highest expression in spleen, lung and testis. Predominantly expressed in erythroid lineages giving rise to erythrocytes and platelets, but absent in lymphoid lineages.

The protein localises to the cell membrane. The enzyme catalyses sphing-4-enine 1-phosphate(in) = sphing-4-enine 1-phosphate(out). The catalysed reaction is sphinganine 1-phosphate(in) = sphinganine 1-phosphate(out). It catalyses the reaction sphinga-4E,14Z-dienine-1-phosphate(in) = sphinga-4E,14Z-dienine-1-phosphate(out). Its function is as follows. Lipid transporter that specifically mediates export of sphingosine-1-phosphate in red blood cells and platelets. Sphingosine-1-phosphate is a signaling sphingolipid and its export from red blood cells into in the plasma is required for red blood cell morphology. Sphingosine-1-phosphate export from platelets is required for platelet aggregation and thrombus formation. Mediates the export of different sphingosine-1-phosphate (S1P) species, including S1P(d18:0) (sphinganine 1-phosphate), S1P (d18:1) (sphing-4-enine 1-phosphate) and S1P (d18:2) (sphinga-4E,14Z-dienine-1-phosphate). Release of sphingosine-1-phosphate is facilitated by a proton gradient. In contrast, cations, such as sodium, are not required to drive sphingosine-1-phosphate transport. In addition to export, also able to mediate S1P import. Does not transport lysophosphatidylcholine (LPC). The polypeptide is Sphingosine-1-phosphate transporter MFSD2B (Mus musculus (Mouse)).